Here is a 59-residue protein sequence, read N- to C-terminus: Single-pass membrane and coiled-coil domain-containing protein 4 (59 aa).

The disordered stretch occupies residues 1 to 25 (MRQLRGKPKKETSKDKKERKQAMQE). Over residues 9-22 (KKETSKDKKERKQA) the composition is skewed to basic and acidic residues. Positions 9–31 (KKETSKDKKERKQAMQEARQQIT) form a coiled coil. A helical transmembrane segment spans residues 32 to 52 (TVVLPTLAVVVLLIVVFVYVA).

It belongs to the SMCO4 family.

It localises to the membrane. The chain is Single-pass membrane and coiled-coil domain-containing protein 4 (smco4) from Taeniopygia guttata (Zebra finch).